Consider the following 157-residue polypeptide: Ribosome maturation factor RimP (157 aa).

Belongs to the RimP family.

Its subcellular location is the cytoplasm. Its function is as follows. Required for maturation of 30S ribosomal subunits. This chain is Ribosome maturation factor RimP, found in Geobacillus sp. (strain WCH70).